Reading from the N-terminus, the 196-residue chain is Large ribosomal subunit protein uL10 (196 aa).

The tract at residues 169–196 is disordered; that stretch reads KAAECPAEAPQPAAETPAEAPEAPADAE. The span at 172 to 196 shows a compositional bias: low complexity; it reads ECPAEAPQPAAETPAEAPEAPADAE.

This sequence belongs to the universal ribosomal protein uL10 family. Part of the ribosomal stalk of the 50S ribosomal subunit. The N-terminus interacts with L11 and the large rRNA to form the base of the stalk. The C-terminus forms an elongated spine to which L12 dimers bind in a sequential fashion forming a multimeric L10(L12)X complex.

Functionally, forms part of the ribosomal stalk, playing a central role in the interaction of the ribosome with GTP-bound translation factors. This Mycobacterium avium (strain 104) protein is Large ribosomal subunit protein uL10.